The chain runs to 493 residues: Activin receptor type-1C (493 aa).

The first 20 residues, 1–20, serve as a signal peptide directing secretion; sequence MTRALCSALRQALLLLAAAA. The Extracellular portion of the chain corresponds to 22-113; that stretch reads LSPGLKCVCL…PNAPKLGPME (92 aa). A helical transmembrane segment spans residues 114–134; that stretch reads LAIIITVPVCLLSIAAMLTVW. At 135–493 the chain is on the cytoplasmic side; sequence ACQGRQCSYR…QLCVKEDCKA (359 aa). One can recognise a GS domain in the interval 165–194; the sequence is KTLKDLIYDVTASGSGSGLPLLVQRTIART. The 291-residue stretch at 195-485 folds into the Protein kinase domain; the sequence is IVLQEIVGKG…LRIKKTISQL (291 aa). Residues 201-209 and lysine 222 contribute to the ATP site; that span reads VGKGRFGEV. Aspartate 323 (proton acceptor) is an active-site residue.

The protein belongs to the protein kinase superfamily. TKL Ser/Thr protein kinase family. TGFB receptor subfamily. In terms of assembly, binds the type 2 receptor protein ACVR2A. Requires Mg(2+) as cofactor. The cofactor is Mn(2+). In terms of tissue distribution, present in pancreas, heart, colon, small intestine, ovary and the hippocampus, medulla oblongata and putamen of the brain. Isoform 1, isoform 2, isoform 3 and isoform 4 are all expressed in the placenta throughout pregnancy.

Its subcellular location is the membrane. It carries out the reaction L-threonyl-[receptor-protein] + ATP = O-phospho-L-threonyl-[receptor-protein] + ADP + H(+). It catalyses the reaction L-seryl-[receptor-protein] + ATP = O-phospho-L-seryl-[receptor-protein] + ADP + H(+). Its function is as follows. Serine/threonine protein kinase which forms a receptor complex on ligand binding. The receptor complex consists of 2 type II and 2 type I transmembrane serine/threonine kinases. Type II receptors phosphorylate and activate type I receptors which autophosphorylate, then bind and activate SMAD transcriptional regulators, SMAD2 and SMAD3. Receptor for activin AB, activin B, activin E and NODAL. Upon NODAL binding, activation results in increased apoptosis and reduced proliferation through suppression of AKT signaling and the activation of Smad2-dependent signaling pathway in pancreatic beta-cells, trophoblasts, epithelial or neuronal cells. Acts as a positive regulator for macrophage activation partially through down-regulation of PPARG expression. The polypeptide is Activin receptor type-1C (Homo sapiens (Human)).